A 347-amino-acid polypeptide reads, in one-letter code: NADH-quinone oxidoreductase subunit H (347 aa).

9 helical membrane passes run 13–33 (IIMIGQSLLLLVCLLVFIAYV), 50–70 (PNVVGPFGLFQSFADLLKFVF), 82–102 (AVFLLAPLVTVLLALSTWAVV), 115–135 (VGILYIFAISSLEVYGIIMGG), 161–181 (IGFVIVTVLLCVGSLNLTDIV), 198–218 (FLDWHWLSLFPMFIIFFISAL), 263–283 (CALTTILFLGGWLPPVDIWIL), 286–306 (VPGIIWFTLKACFVFFMFAMV), and 321–341 (LGWKVFLPLSLAMVVIVAFVL).

It belongs to the complex I subunit 1 family. As to quaternary structure, NDH-1 is composed of 14 different subunits. Subunits NuoA, H, J, K, L, M, N constitute the membrane sector of the complex.

The protein localises to the cell inner membrane. It carries out the reaction a quinone + NADH + 5 H(+)(in) = a quinol + NAD(+) + 4 H(+)(out). Functionally, NDH-1 shuttles electrons from NADH, via FMN and iron-sulfur (Fe-S) centers, to quinones in the respiratory chain. The immediate electron acceptor for the enzyme in this species is believed to be ubiquinone. Couples the redox reaction to proton translocation (for every two electrons transferred, four hydrogen ions are translocated across the cytoplasmic membrane), and thus conserves the redox energy in a proton gradient. This subunit may bind ubiquinone. The sequence is that of NADH-quinone oxidoreductase subunit H from Rhizobium johnstonii (strain DSM 114642 / LMG 32736 / 3841) (Rhizobium leguminosarum bv. viciae).